The sequence spans 76 residues: uncharacterized protein (76 aa).

Residues 1 to 22 (MFTKALSVVLLTCALFSGQLMA) form the signal peptide.

This is an uncharacterized protein from Escherichia coli O157:H7.